The sequence spans 152 residues: Histone H2B.1 (152 aa).

Basic and acidic residues predominate over residues 1-23; it reads MAPKAEKKPAEKKPAAGEEKSAE. The segment at 1–60 is disordered; the sequence is MAPKAEKKPAEKKPAAGEEKSAEKAPAGKKPKAEKRLPASKASSKEGGAGDKKGRKKAKK. An N6-acetyllysine mark is found at Lys-7 and Lys-35. Lys-148 is covalently cross-linked (Glycyl lysine isopeptide (Lys-Gly) (interchain with G-Cter in ubiquitin)).

This sequence belongs to the histone H2B family. As to quaternary structure, the nucleosome is a histone octamer containing two molecules each of H2A, H2B, H3 and H4 assembled in one H3-H4 heterotetramer and two H2A-H2B heterodimers. The octamer wraps approximately 147 bp of DNA. In terms of processing, can be acetylated to form H2BK6ac and H2BK33ac. Monoubiquitinated by BRE1 to form H2BK143ub1 and deubiquitinated by UBP26. Required for heterochromatic histone H3 di- and trimethylation at H3K4me. May give a specific tag for epigenetic transcriptional activation.

The protein resides in the nucleus. Its subcellular location is the chromosome. Its function is as follows. Core component of nucleosome. Nucleosomes wrap and compact DNA into chromatin, limiting DNA accessibility to the cellular machineries which require DNA as a template. Histones thereby play a central role in transcription regulation, DNA repair, DNA replication and chromosomal stability. DNA accessibility is regulated via a complex set of post-translational modifications of histones, also called histone code, and nucleosome remodeling. In Oryza sativa subsp. indica (Rice), this protein is Histone H2B.1.